Reading from the N-terminus, the 360-residue chain is Phospho-N-acetylmuramoyl-pentapeptide-transferase (360 aa).

At 1–25 (MLVWLAEHLVKYYSGFNVFSYLTFR) the chain is on the periplasmic side. The chain crosses the membrane as a helical span at residues 26 to 46 (AIVSLLTALFISLWMGPRMIA). At 47–71 (HLQKLSFGQVVRNDGPESHFSKRGT) the chain is on the cytoplasmic side. A helical membrane pass occupies residues 72–92 (PTMGGIMILTAIVISVLLWAY). Position 93 (proline 93) is a topological domain, periplasmic. The helical transmembrane segment at 94 to 114 (SNPYVWCVLVVLVGYGVIGFV) threads the bilayer. The Cytoplasmic segment spans residues 115–131 (DDYRKVVRKDTKGLIAR). Residues 132–152 (WKYFWMSVIALGVAFALYLAG) form a helical membrane-spanning segment. Residues 153–167 (KDTPATQLVVPFFKD) are Periplasmic-facing. Residues 168 to 188 (VMPQLGLFYILLAYFVIVGTG) traverse the membrane as a helical segment. Topologically, residues 189–198 (NAVNLTDGLD) are cytoplasmic. The helical transmembrane segment at 199-219 (GLAIMPTVFVAGGFALVAWAT) threads the bilayer. At 220 to 235 (GNMNFASYLHIPYLRH) the chain is on the periplasmic side. Residues 236 to 256 (AGELVIVCTAIVGAGLGFLWF) traverse the membrane as a helical segment. At 257–262 (NTYPAQ) the chain is on the cytoplasmic side. Residues 263–283 (VFMGDVGSLALGGALGIIAVL) form a helical membrane-spanning segment. At 284-287 (LRQE) the chain is on the periplasmic side. The chain crosses the membrane as a helical span at residues 288–308 (FLLVIMGGVFVVETLSVILQV). The Cytoplasmic segment spans residues 309–337 (GSFKLRGQRIFRMAPIHHHYELKGWPEPR). A helical membrane pass occupies residues 338 to 358 (VIVRFWIISLMLVLIGLATLK). Topologically, residues 359-360 (VR) are periplasmic.

It belongs to the glycosyltransferase 4 family. MraY subfamily. The cofactor is Mg(2+).

It localises to the cell inner membrane. The enzyme catalyses UDP-N-acetyl-alpha-D-muramoyl-L-alanyl-gamma-D-glutamyl-meso-2,6-diaminopimeloyl-D-alanyl-D-alanine + di-trans,octa-cis-undecaprenyl phosphate = di-trans,octa-cis-undecaprenyl diphospho-N-acetyl-alpha-D-muramoyl-L-alanyl-D-glutamyl-meso-2,6-diaminopimeloyl-D-alanyl-D-alanine + UMP. It participates in cell wall biogenesis; peptidoglycan biosynthesis. Catalyzes the initial step of the lipid cycle reactions in the biosynthesis of the cell wall peptidoglycan: transfers peptidoglycan precursor phospho-MurNAc-pentapeptide from UDP-MurNAc-pentapeptide onto the lipid carrier undecaprenyl phosphate, yielding undecaprenyl-pyrophosphoryl-MurNAc-pentapeptide, known as lipid I. The protein is Phospho-N-acetylmuramoyl-pentapeptide-transferase of Shigella boydii serotype 18 (strain CDC 3083-94 / BS512).